A 148-amino-acid chain; its full sequence is 3-dehydroquinate dehydratase (148 aa).

The active-site Proton acceptor is Y24. Residues N80, H86, and D93 each coordinate substrate. The active-site Proton donor is H106. Substrate is bound by residues 107 to 108 (IS) and R117.

It belongs to the type-II 3-dehydroquinase family. As to quaternary structure, homododecamer.

The catalysed reaction is 3-dehydroquinate = 3-dehydroshikimate + H2O. Its pathway is metabolic intermediate biosynthesis; chorismate biosynthesis; chorismate from D-erythrose 4-phosphate and phosphoenolpyruvate: step 3/7. In terms of biological role, catalyzes a trans-dehydration via an enolate intermediate. In Acidovorax ebreus (strain TPSY) (Diaphorobacter sp. (strain TPSY)), this protein is 3-dehydroquinate dehydratase.